The primary structure comprises 75 residues: Large ribosomal subunit protein bL31 (75 aa).

The protein belongs to the bacterial ribosomal protein bL31 family. Type A subfamily. Part of the 50S ribosomal subunit.

Functionally, binds the 23S rRNA. The polypeptide is Large ribosomal subunit protein bL31 (Pelodictyon phaeoclathratiforme (strain DSM 5477 / BU-1)).